A 386-amino-acid polypeptide reads, in one-letter code: Succinate--CoA ligase [ADP-forming] subunit beta (386 aa).

ATP is bound by residues Lys-46, 53 to 55, Glu-99, Ala-102, and Glu-107; that span reads GRG. The Mg(2+) site is built by Asn-199 and Asp-213. Residues Asn-264 and 321–323 each bind substrate; that span reads GIV.

Belongs to the succinate/malate CoA ligase beta subunit family. As to quaternary structure, heterotetramer of two alpha and two beta subunits. It depends on Mg(2+) as a cofactor.

It catalyses the reaction succinate + ATP + CoA = succinyl-CoA + ADP + phosphate. The catalysed reaction is GTP + succinate + CoA = succinyl-CoA + GDP + phosphate. Its pathway is carbohydrate metabolism; tricarboxylic acid cycle; succinate from succinyl-CoA (ligase route): step 1/1. In terms of biological role, succinyl-CoA synthetase functions in the citric acid cycle (TCA), coupling the hydrolysis of succinyl-CoA to the synthesis of either ATP or GTP and thus represents the only step of substrate-level phosphorylation in the TCA. The beta subunit provides nucleotide specificity of the enzyme and binds the substrate succinate, while the binding sites for coenzyme A and phosphate are found in the alpha subunit. The polypeptide is Succinate--CoA ligase [ADP-forming] subunit beta (Actinobacillus succinogenes (strain ATCC 55618 / DSM 22257 / CCUG 43843 / 130Z)).